We begin with the raw amino-acid sequence, 534 residues long: C-22 sterol desaturase ERG5B (534 aa).

The chain crosses the membrane as a helical span at residues 43–61 (IAVTIFAVLIAYDQFMYIW). Residue cysteine 480 coordinates heme.

This sequence belongs to the cytochrome P450 family. It depends on heme as a cofactor.

It localises to the endoplasmic reticulum membrane. It catalyses the reaction 5-dehydroepisterol + NADPH + O2 + H(+) = ergosta-5,7,22,24(28)-tetraen-3beta-ol + NADP(+) + 2 H2O. It participates in steroid metabolism; ergosterol biosynthesis. Functionally, C-22 sterol desaturase; part of the third module of ergosterol biosynthesis pathway that includes the late steps of the pathway. ERG5A and ERG5B convert 5-dehydroepisterol into ergosta-5,7,22,24(28)-tetraen-3beta-ol by forming the C-22(23) double bond in the sterol side chain. The third module or late pathway involves the ergosterol synthesis itself through consecutive reactions that mainly occur in the endoplasmic reticulum (ER) membrane. Firstly, the squalene synthase ERG9 catalyzes the condensation of 2 farnesyl pyrophosphate moieties to form squalene, which is the precursor of all steroids. Squalene synthase is crucial for balancing the incorporation of farnesyl diphosphate (FPP) into sterol and nonsterol isoprene synthesis. Secondly, squalene is converted into lanosterol by the consecutive action of the squalene epoxidase ERG1 and the lanosterol synthase ERG7. Then, the delta(24)-sterol C-methyltransferase ERG6 methylates lanosterol at C-24 to produce eburicol. Eburicol is the substrate of the sterol 14-alpha demethylase encoded by CYP51A, CYP51B and CYP51C, to yield 4,4,24-trimethyl ergosta-8,14,24(28)-trienol. CYP51B encodes the enzyme primarily responsible for sterol 14-alpha-demethylation, and plays an essential role in ascospore formation. CYP51A encodes an additional sterol 14-alpha-demethylase, induced on ergosterol depletion and responsible for the intrinsic variation in azole sensitivity. The third CYP51 isoform, CYP51C, does not encode a sterol 14-alpha-demethylase, but is required for full virulence on host wheat ears. The C-14 reductase ERG24 then reduces the C14=C15 double bond which leads to 4,4-dimethylfecosterol. A sequence of further demethylations at C-4, involving the C-4 demethylation complex containing the C-4 methylsterol oxidases ERG25, the sterol-4-alpha-carboxylate 3-dehydrogenase ERG26 and the 3-keto-steroid reductase ERG27, leads to the production of fecosterol via 4-methylfecosterol. ERG28 has a role as a scaffold to help anchor ERG25, ERG26 and ERG27 to the endoplasmic reticulum. The C-8 sterol isomerase ERG2 then catalyzes the reaction which results in unsaturation at C-7 in the B ring of sterols and thus converts fecosterol to episterol. The sterol-C5-desaturases ERG3A and ERG3BB then catalyze the introduction of a C-5 double bond in the B ring to produce 5-dehydroepisterol. The C-22 sterol desaturases ERG5A and ERG5B further convert 5-dehydroepisterol into ergosta-5,7,22,24(28)-tetraen-3beta-ol by forming the C-22(23) double bond in the sterol side chain. Finally, ergosta-5,7,22,24(28)-tetraen-3beta-ol is substrate of the C-24(28) sterol reductase ERG4 to produce ergosterol. This chain is C-22 sterol desaturase ERG5B, found in Gibberella zeae (strain ATCC MYA-4620 / CBS 123657 / FGSC 9075 / NRRL 31084 / PH-1) (Wheat head blight fungus).